The primary structure comprises 195 residues: Nuclear transcription factor Y subunit C-10 (195 aa).

Positions 1-24 are disordered; it reads MRRPKSSHVRMEPVAPRSHNTMPM.

It belongs to the NFYC/HAP5 subunit family. As to quaternary structure, heterotrimeric transcription factor composed of three components, NF-YA, NF-YB and NF-YC. NF-YB and NF-YC must interact and dimerize for NF-YA association and DNA binding.

It localises to the nucleus. In terms of biological role, stimulates the transcription of various genes by recognizing and binding to a CCAAT motif in promoters. This chain is Nuclear transcription factor Y subunit C-10 (NFYC10), found in Arabidopsis thaliana (Mouse-ear cress).